The primary structure comprises 288 residues: MMRCMQSPEVHPAAAGDAEPPTHSTFAVSRWRRGELMLSPDEVAEEVPVALVYNGISHAVMLATPADLEDFALGFSLSEGIVTRASDVYDIEIDTREHGIAVQLEIASEAFMRLKDRRRSLAGRTGCGLCGTESLEQVMRLPAPVRSDASFHTDVIQAAFVQLQLRQELQQHTGATHAAAWLRADGHVSLVREDVGRHNALDKLAGALASSGEDISSGAVLVTSRASYEMVLKTAAIGAGVLAAVSAPTALAVRLAEQASITLAGFVRAGAHVVYAHPQRLQHEASLA.

Residues 1 to 23 (MMRCMQSPEVHPAAAGDAEPPTH) are disordered. The Cysteine persulfide intermediate role is filled by Cys-127.

The protein belongs to the FdhD family.

The protein localises to the cytoplasm. In terms of biological role, required for formate dehydrogenase (FDH) activity. Acts as a sulfur carrier protein that transfers sulfur from IscS to the molybdenum cofactor prior to its insertion into FDH. This chain is Sulfur carrier protein FdhD, found in Cupriavidus necator (strain ATCC 17699 / DSM 428 / KCTC 22496 / NCIMB 10442 / H16 / Stanier 337) (Ralstonia eutropha).